Reading from the N-terminus, the 37-residue chain is Large ribosomal subunit protein bL36 (37 aa).

It belongs to the bacterial ribosomal protein bL36 family.

This is Large ribosomal subunit protein bL36 from Mycobacterium ulcerans (strain Agy99).